The primary structure comprises 395 residues: Cuticlin-5 (395 aa).

The N-terminal stretch at 1–18 is a signal peptide; that stretch reads MNFILAVFAIILLQAVRG. Residues 19–358 are Extracellular-facing; sequence EIDNAIVGDP…ELCMTAIGTT (340 aa). Positions 46–291 constitute a ZP domain; the sequence is SCVGNFIIKV…DYCDVPSCPD (246 aa). N-linked (GlcNAc...) asparagine glycans are attached at residues N90 and N307. A helical membrane pass occupies residues 359–379; the sequence is LLVFLNAFLFIISLVSIVHVC. Over 380 to 395 the chain is Cytoplasmic; that stretch reads CFRTSPKLEKTKSTML.

The protein resides in the cell membrane. Functionally, plays a role in alae formation in L1 and dauer stage larvae. In Caenorhabditis elegans, this protein is Cuticlin-5.